Here is a 186-residue protein sequence, read N- to C-terminus: dTTP/UTP pyrophosphatase (186 aa).

The Proton acceptor role is filled by Asp-66.

Belongs to the Maf family. YhdE subfamily. It depends on a divalent metal cation as a cofactor.

The protein resides in the cytoplasm. The catalysed reaction is dTTP + H2O = dTMP + diphosphate + H(+). The enzyme catalyses UTP + H2O = UMP + diphosphate + H(+). Nucleoside triphosphate pyrophosphatase that hydrolyzes dTTP and UTP. May have a dual role in cell division arrest and in preventing the incorporation of modified nucleotides into cellular nucleic acids. This Pyrococcus horikoshii (strain ATCC 700860 / DSM 12428 / JCM 9974 / NBRC 100139 / OT-3) protein is dTTP/UTP pyrophosphatase.